A 953-amino-acid chain; its full sequence is Communesin biosynthesis cluster-specific transcription factor cnsN (953 aa).

The tract at residues 371–418 (ELESTSPRTSHSSLSQDDTASLHSRSSLSSSPGRFPPSQKLVATSDSP) is disordered. Over residues 374 to 408 (STSPRTSHSSLSQDDTASLHSRSSLSSSPGRFPPS) the composition is skewed to low complexity.

It localises to the nucleus. Transcriptional regulator; part of the gene cluster that mediates the biosynthesis of communesins, a prominent class of indole alkaloids with great potential as pharmaceuticals. The polypeptide is Communesin biosynthesis cluster-specific transcription factor cnsN (Penicillium expansum (Blue mold rot fungus)).